A 158-amino-acid polypeptide reads, in one-letter code: Cyclic pyranopterin monophosphate synthase (158 aa).

Residues 75-77 and 113-114 each bind substrate; these read LCH and ME. The active site involves Asp-128.

Belongs to the MoaC family. Homohexamer; trimer of dimers.

The enzyme catalyses (8S)-3',8-cyclo-7,8-dihydroguanosine 5'-triphosphate = cyclic pyranopterin phosphate + diphosphate. It functions in the pathway cofactor biosynthesis; molybdopterin biosynthesis. Functionally, catalyzes the conversion of (8S)-3',8-cyclo-7,8-dihydroguanosine 5'-triphosphate to cyclic pyranopterin monophosphate (cPMP). In Dinoroseobacter shibae (strain DSM 16493 / NCIMB 14021 / DFL 12), this protein is Cyclic pyranopterin monophosphate synthase.